The primary structure comprises 301 residues: D-alanine--D-alanine ligase A (301 aa).

The ATP-grasp domain occupies 99–293 (KRILAFGNVR…FEELLDTIIE (195 aa)). Residue 126–181 (IENLGYPVFVKPNNGGSSVATTLVESKEAVKDAVLEALKYDTEVMIEEYIKGDEIT) coordinates ATP. Mg(2+) is bound by residues aspartate 248, glutamate 260, and asparagine 262.

The protein belongs to the D-alanine--D-alanine ligase family. It depends on Mg(2+) as a cofactor. Mn(2+) serves as cofactor.

It localises to the cytoplasm. The enzyme catalyses 2 D-alanine + ATP = D-alanyl-D-alanine + ADP + phosphate + H(+). The protein operates within cell wall biogenesis; peptidoglycan biosynthesis. Cell wall formation. The protein is D-alanine--D-alanine ligase A of Clostridium perfringens (strain 13 / Type A).